Reading from the N-terminus, the 111-residue chain is Protein YibV (111 aa).

In Escherichia coli O157:H7, this protein is Protein YibV (yibV).